Consider the following 248-residue polypeptide: Probable transcriptional regulatory protein Syncc9902_0542 (248 aa).

Belongs to the TACO1 family.

Its subcellular location is the cytoplasm. The sequence is that of Probable transcriptional regulatory protein Syncc9902_0542 from Synechococcus sp. (strain CC9902).